The chain runs to 198 residues: HTH-type transcriptional regulator BetI (198 aa).

An HTH tetR-type domain is found at 8 to 68; it reads PLRRRELIDA…ATMRHLLREL (61 aa). The segment at residues 31–50 is a DNA-binding region (H-T-H motif); sequence TVAQIAHEAGVSPALAHHYF.

The protein operates within amine and polyamine biosynthesis; betaine biosynthesis via choline pathway [regulation]. Its function is as follows. Repressor involved in the biosynthesis of the osmoprotectant glycine betaine. It represses transcription of the choline transporter BetT and the genes of BetAB involved in the synthesis of glycine betaine. The polypeptide is HTH-type transcriptional regulator BetI (Brucella suis biovar 1 (strain 1330)).